A 499-amino-acid chain; its full sequence is MKKKYILAIDQGTTSSRAILFDHKGRITGMAQREFTQIFPQPGWVEHNPRDIMTSVYTTITELLNNTQIDVRAIAGIGITNQRETTVIWNRQTGQPIYNAIVWQSRQTKNICDQLTTAGYQDLVHAKTGLLMDAYFSGTKVKWILDHAENAHTQAARGELAFGTIDTWIIWNLTGGQVHVTDYSNASRTLMYDIHALRWDPDLLTMLDIPAAILPDVRSSSEIYGLTQTPYFHGEQIPIAGIAGDQQAALFGQACFEPGMAKNTYGTGCFMLMHTGKKAVESKNGLLTTIAWGLNGEIEYALEGSIFIAGSVVQWLRDGLRMFGKASDSQAYADRVSDNGGVYVVPAFVGLGAPYWRSDVRGAVFGLTRSTTKEHFVRAALESMAYQTRDVLSAMQADADIELKELRTDGAAITNDFMAQFQSDILAVPVLRSQIAETTALGAAYLAGLATGFWSSREEMTQHWAINRCFKPQMDKEQREHLYAGWKQAVAATLGFRVA.

Residue threonine 13 coordinates ADP. 3 residues coordinate ATP: threonine 13, threonine 14, and serine 15. Threonine 13 is a binding site for sn-glycerol 3-phosphate. Residue arginine 17 coordinates ADP. The sn-glycerol 3-phosphate site is built by arginine 83, glutamate 84, tyrosine 135, and aspartate 245. Residues arginine 83, glutamate 84, tyrosine 135, aspartate 245, and glutamine 246 each coordinate glycerol. ADP contacts are provided by threonine 267 and glycine 310. The ATP site is built by threonine 267, glycine 310, glutamine 314, and alanine 411. ADP is bound by residues alanine 411 and asparagine 415.

It belongs to the FGGY kinase family.

It catalyses the reaction glycerol + ATP = sn-glycerol 3-phosphate + ADP + H(+). It functions in the pathway polyol metabolism; glycerol degradation via glycerol kinase pathway; sn-glycerol 3-phosphate from glycerol: step 1/1. With respect to regulation, inhibited by fructose 1,6-bisphosphate (FBP). In terms of biological role, key enzyme in the regulation of glycerol uptake and metabolism. Catalyzes the phosphorylation of glycerol to yield sn-glycerol 3-phosphate. The sequence is that of Glycerol kinase from Xylella fastidiosa (strain M12).